The primary structure comprises 446 residues: Calcium-binding and coiled-coil domain-containing protein 2 (446 aa).

The short motif at 133-136 (ILVV) is the CLIR element. Residues 137–349 (TTQGEVEEIE…RENSRLLSYM (213 aa)) are a coiled coil. Residues 203 to 206 (DYWE) carry the LIR-like motif. Residues 371-381 (NPGLVYGNPYS) are interaction with LGALS8. An interaction with MYO6 region spans residues 395 to 446 (KKCPICKADDICDHILEQQQMQPLCLNCPICDKIFPATEKQIFEDHVFCHSL). A UBZ1-type zinc finger spans residues 419–444 (CLNCPICDKIFPATEKQIFEDHVFCH). Zn(2+) contacts are provided by C422, C425, H440, and H444. Position 445 is a phosphoserine (S445).

This sequence belongs to the CALCOCO family. In terms of assembly, dimer. Part of a complex consisting of CALCOCO2, TAX1BP1 and MYO6. Interacts with MYO6. Interacts with GEMIN4. Interacts with ATG8 family members MAP1LC3A, MAP1LC3B, GABARAP, GABARAPL1 and GABARAPL2. Interacts with ATG8 family member MAP1LC3C. Interacts with LGALS8. Interacts with TOM1; the interaction is indirect and is mediated by MYO6, which acts as a bridge between TOM1 and CALCOCO2. Interacts with AZI2.

Its subcellular location is the cytoplasm. It is found in the perinuclear region. It localises to the cytoskeleton. The protein resides in the cytoplasmic vesicle. The protein localises to the autophagosome membrane. Functionally, xenophagy-specific receptor required for autophagy-mediated intracellular bacteria degradation. Acts as an effector protein of galectin-sensed membrane damage that restricts the proliferation of infecting pathogens upon entry into the cytosol by targeting LGALS8-associated bacteria for autophagy. Initially orchestrates bacteria targeting to autophagosomes and subsequently ensures pathogen degradation by regulating pathogen-containing autophagosome maturation. Bacteria targeting to autophagosomes relies on its interaction with MAP1LC3A, MAP1LC3B and/or GABARAPL2, whereas regulation of pathogen-containing autophagosome maturation requires the interaction with MAP3LC3C. May play a role in ruffle formation and actin cytoskeleton organization and seems to negatively regulate constitutive secretion. This Pongo abelii (Sumatran orangutan) protein is Calcium-binding and coiled-coil domain-containing protein 2.